The primary structure comprises 304 residues: Protein pxr1 (304 aa).

Residues 1–11 (MGLAAPRKKTK) show a composition bias toward basic residues. Disordered regions lie at residues 1 to 25 (MGLAAPRKKTKISHDPNNTSWSRST), 144 to 238 (NATA…DTET), and 256 to 276 (TSLLASNGPSTSRERQPMGRR). Over residues 15 to 25 (DPNNTSWSRST) the composition is skewed to polar residues. The region spanning 25-79 (TDGFGHRILKAQGWTPGDFLGARNATHSDLFTTASASHIRVVLKDDTLGLGARPK) is the G-patch domain. Composition is skewed to basic and acidic residues over residues 154–170 (LRVDFPRETSSNEHENG) and 204–238 (GKEMDMSPRKSREKKQEKIQKKRKIGDCDRLDTET). The span at 256-266 (TSLLASNGPST) shows a compositional bias: polar residues.

This sequence belongs to the PINX1 family.

Its subcellular location is the nucleus. The protein resides in the nucleolus. In terms of biological role, involved in rRNA-processing at A0, A1 and A2 sites and negatively regulates telomerase. This Aspergillus fumigatus (strain ATCC MYA-4609 / CBS 101355 / FGSC A1100 / Af293) (Neosartorya fumigata) protein is Protein pxr1 (pxr1).